Here is a 368-residue protein sequence, read N- to C-terminus: MIKKTILNDTHQALGAKMVDFSGWEMPIHYGSQIDEHHHVRRNAGIFDVSHMTVIDLHGTQVRPLLRRLLANSVDKLKVPGKALYSCMLNPQGGVIDDLIVYYLREDYFRFIVNAATREKDLAWINTQASAFNVRVEERADLAMLAVQGPAARAQVTNLLAETHRDAVEKLGRFAALEVASHSKKPLFISRTGYTGEDGFEILLPQEETITLWNALLKTGVKPIGLGARDTLRLEAGMNLYGQDMDEQVSPYEAALGWTVMLDEGRNFIGRNVLEQQKTNGVSRQMIGLLMDEKGVLRHGQKVLTAQGEGHILSGTFSPTLNKAIGFARVPAGKPSEVRVNIRDREIPVRVVKFPFVREGQTQPNIFD.

The protein belongs to the GcvT family. As to quaternary structure, the glycine cleavage system is composed of four proteins: P, T, L and H.

The catalysed reaction is N(6)-[(R)-S(8)-aminomethyldihydrolipoyl]-L-lysyl-[protein] + (6S)-5,6,7,8-tetrahydrofolate = N(6)-[(R)-dihydrolipoyl]-L-lysyl-[protein] + (6R)-5,10-methylene-5,6,7,8-tetrahydrofolate + NH4(+). The glycine cleavage system catalyzes the degradation of glycine. This is Aminomethyltransferase from Xylella fastidiosa (strain M23).